We begin with the raw amino-acid sequence, 1007 residues long: Lysosomal alpha-mannosidase (1007 aa).

Residues 1–47 (MGASVLPLGLGAGDCQSSSGRRMSACLPRTALSFLLSLLLATPGARA) form the signal peptide. 2 disulfide bridges follow: Cys-53-Cys-356 and Cys-266-Cys-271. Residues His-70 and Asp-72 each contribute to the Zn(2+) site. Asn-131 carries N-linked (GlcNAc...) asparagine glycosylation. A Zn(2+)-binding site is contributed by Asp-194. Asp-194 (nucleophile) is an active-site residue. Asn-308, Asn-343, and Asn-365 each carry an N-linked (GlcNAc...) asparagine glycan. 2 disulfides stabilise this stretch: Cys-410/Cys-470 and Cys-491/Cys-499. His-444 lines the Zn(2+) pocket. Residues Asn-495, Asn-540, Asn-639, Asn-686, Asn-760, and Asn-927 are each glycosylated (N-linked (GlcNAc...) asparagine).

The protein belongs to the glycosyl hydrolase 38 family. Zn(2+) serves as cofactor.

It localises to the lysosome. It carries out the reaction Hydrolysis of terminal, non-reducing alpha-D-mannose residues in alpha-D-mannosides.. Functionally, necessary for the catabolism of N-linked carbohydrates released during glycoprotein turnover. The chain is Lysosomal alpha-mannosidase (MAN2B1) from Cavia porcellus (Guinea pig).